The following is a 548-amino-acid chain: Membrane protein insertase YidC (548 aa).

Residues 6–26 form a helical membrane-spanning segment; that stretch reads NLLVIALLFVSFMIWQAWEQD. The interval 28–55 is disordered; that stretch reads NPQPQAQQTTQTTTTAAGSAADQGVPAS. Over residues 30–50 the composition is skewed to low complexity; that stretch reads QPQAQQTTQTTTTAAGSAADQ. The next 4 membrane-spanning stretches (helical) occupy residues 350–370, 420–440, 458–478, and 499–519; these read FVGN…GIMY, LGGC…YYML, LSAQ…MFFI, and PVIF…YYIV.

This sequence belongs to the OXA1/ALB3/YidC family. Type 1 subfamily. In terms of assembly, interacts with the Sec translocase complex via SecD. Specifically interacts with transmembrane segments of nascent integral membrane proteins during membrane integration.

The protein localises to the cell inner membrane. Functionally, required for the insertion and/or proper folding and/or complex formation of integral membrane proteins into the membrane. Involved in integration of membrane proteins that insert both dependently and independently of the Sec translocase complex, as well as at least some lipoproteins. Aids folding of multispanning membrane proteins. The protein is Membrane protein insertase YidC of Shigella dysenteriae serotype 1 (strain Sd197).